A 532-amino-acid polypeptide reads, in one-letter code: Apolipoprotein N-acyltransferase (532 aa).

The next 6 membrane-spanning stretches (helical) occupy residues 37–57, 75–95, 106–126, 128–148, 179–199, and 207–227; these read IFVA…GAIA, WWFG…ALLV, LAVL…AMIA, LLWS…ALAE, VIGL…PALL, and TGIG…AWTL. The CN hydrolase domain occupies 245 to 494; that stretch reads VQPSIAQAMK…VGVVDSYLPS (250 aa). The active-site Proton acceptor is Glu289. Lys353 is an active-site residue. Catalysis depends on Cys406, which acts as the Nucleophile. Residues 505-525 form a helical membrane-spanning segment; sequence GWIQTVLILLTLLAASVGLIL.

This sequence belongs to the CN hydrolase family. Apolipoprotein N-acyltransferase subfamily.

The protein localises to the cell inner membrane. It carries out the reaction N-terminal S-1,2-diacyl-sn-glyceryl-L-cysteinyl-[lipoprotein] + a glycerophospholipid = N-acyl-S-1,2-diacyl-sn-glyceryl-L-cysteinyl-[lipoprotein] + a 2-acyl-sn-glycero-3-phospholipid + H(+). It functions in the pathway protein modification; lipoprotein biosynthesis (N-acyl transfer). Functionally, catalyzes the phospholipid dependent N-acylation of the N-terminal cysteine of apolipoprotein, the last step in lipoprotein maturation. This is Apolipoprotein N-acyltransferase from Brucella suis biovar 1 (strain 1330).